A 126-amino-acid polypeptide reads, in one-letter code: MLSDNNFVSETLENVQYLLPGAKVIKLRGYSRAHKVYTIAKSPVEKWKVAAGLSGSEIAILIRKGHWIGASIPAGGIVIDIDDSKQGELVKGLLDAQNFHCHCIRTLMGGSLFLRITNMGKRKLNK.

This is an uncharacterized protein from Bacillus subtilis (strain 168).